A 269-amino-acid chain; its full sequence is Formamidopyrimidine-DNA glycosylase (269 aa).

The Schiff-base intermediate with DNA role is filled by Pro2. Residue Glu3 is the Proton donor of the active site. Catalysis depends on Lys57, which acts as the Proton donor; for beta-elimination activity. Residues His90, Arg109, and Lys150 each coordinate DNA. The FPG-type zinc-finger motif lies at 235 to 269 (QVYGRAGEPCRACGTPIESAKHGQRSTFFCPRCQR). Arg259 acts as the Proton donor; for delta-elimination activity in catalysis.

Belongs to the FPG family. Monomer. Requires Zn(2+) as cofactor.

The enzyme catalyses Hydrolysis of DNA containing ring-opened 7-methylguanine residues, releasing 2,6-diamino-4-hydroxy-5-(N-methyl)formamidopyrimidine.. It catalyses the reaction 2'-deoxyribonucleotide-(2'-deoxyribose 5'-phosphate)-2'-deoxyribonucleotide-DNA = a 3'-end 2'-deoxyribonucleotide-(2,3-dehydro-2,3-deoxyribose 5'-phosphate)-DNA + a 5'-end 5'-phospho-2'-deoxyribonucleoside-DNA + H(+). Involved in base excision repair of DNA damaged by oxidation or by mutagenic agents. Acts as a DNA glycosylase that recognizes and removes damaged bases. Has a preference for oxidized purines, such as 7,8-dihydro-8-oxoguanine (8-oxoG). Has AP (apurinic/apyrimidinic) lyase activity and introduces nicks in the DNA strand. Cleaves the DNA backbone by beta-delta elimination to generate a single-strand break at the site of the removed base with both 3'- and 5'-phosphates. The protein is Formamidopyrimidine-DNA glycosylase of Serratia proteamaculans (strain 568).